We begin with the raw amino-acid sequence, 104 residues long: uncharacterized protein (104 aa).

The interval methionine 1–glutamate 24 is disordered.

This is an uncharacterized protein from Saccharomyces cerevisiae (strain ATCC 204508 / S288c) (Baker's yeast).